The primary structure comprises 211 residues: Small ribosomal subunit protein uS3 (211 aa).

The KH type-2 domain maps to 16–85; it reads IDEYFKTKLV…NPQIEVKQVE (70 aa).

It belongs to the universal ribosomal protein uS3 family. Part of the 30S ribosomal subunit.

Functionally, binds the lower part of the 30S subunit head. In Methanococcus maripaludis (strain C7 / ATCC BAA-1331), this protein is Small ribosomal subunit protein uS3.